Reading from the N-terminus, the 2656-residue chain is 1-phosphatidylinositol 3-phosphate 5-kinase (2656 aa).

The disordered stretch occupies residues 24–159 (FGTDDSQKDF…NSTNNDTSSN (136 aa)). Composition is skewed to low complexity over residues 59–107 (NNNN…NNNN) and 124–159 (SNTTNTNTNITTNTNITTNTNTNTNTNSTNNDTSSN). The FYVE-type zinc finger occupies 198–255 (DHSSAVCYECSEEFTTFKRRHHCRLCGQIFCWKCSQKTLTDGKGERVRVCNFCYRRYM). Residues Cys204, Cys207, Cys220, Cys223, Cys228, Cys231, Cys247, and Cys250 each contribute to the Zn(2+) site. Over residues 304 to 331 (NVSLGNSGDNSSFVQSPNNNFSQSPTFS) the composition is skewed to polar residues. 12 disordered regions span residues 304-383 (NVSL…NNQQ), 465-495 (DHHQQQQQSNSHGSLSATPSNTPSGLISPIV), 517-570 (DNLD…SSSS), 618-657 (NNNDNGNDDNNNNNNDNNNNTTIEVDPRHSMPSKTSNTSF), 670-823 (TIGR…QQQP), 1115-1150 (SNSIQLQQQQNSNSPASLQNSTTTTNNNNNNNNNST), 1633-1659 (RSKRNVQQQQQQQQHQQSQQPQPQILI), 1710-1844 (VNNN…SSTP), 2031-2127 (QQQQ…SISP), 2179-2208 (NQQQQQQQQPSPIIIDEKDDRNTEKSSIIE), 2246-2304 (QQGD…SSNS), and 2617-2656 (NNNNNYNYNNFNNNNFNNNNNISNNGNGNINQRQVQQINK). A compositionally biased stretch (low complexity) spans 332 to 355 (QQQQQQQQQQQQQQQQQQQQQQQQ). Polar residues-rich tracts occupy residues 356 to 371 (TTGVMSGLNPFSNSTL), 473 to 489 (SNSHGSLSATPSNTPSG), and 542 to 557 (SHSSANDLGTSNTVST). Composition is skewed to low complexity over residues 558-570 (GESNSESKLSSSS), 618-637 (NNNDNGNDDNNNNNNDNNNN), 674-730 (NNNN…NLPN), 743-757 (QQQQQQQQQQQQPQP), and 811-823 (PSSSSNNQQQQQP). Composition is skewed to low complexity over residues 1639 to 1656 (QQQQQQQQHQQSQQPQPQ) and 1710 to 1746 (VNNNNNNNNNNNNNNNNNNNNNNNNNNNNNNNNNNNN). 2 coiled-coil regions span residues 1741–1823 (NNNN…NNNN) and 2019–2061 (KRIS…QQEQ). The segment covering 1750–1798 (NKSENENENKNENKNENENENENKNENKNENENENKKENENQLEIKNEN) has biased composition (basic and acidic residues). Composition is skewed to low complexity over residues 1807-1833 (NNNNNNNNNNNNNNNNNNNNNNNIDNN), 2031-2061 (QQQQQQDSQDLESSSQQQQQQQQQQQEQQEQ), 2078-2107 (SPSSLLKISSSSLPKDNNNSSENKPNSETN), and 2118-2127 (LSGSPISISP). Basic and acidic residues predominate over residues 2193 to 2202 (IDEKDDRNTE). 2 stretches are compositionally biased toward low complexity: residues 2252–2283 (NNNNNNNNNNNNNNNNNNNNNNNNNNNTNNNN) and 2618–2647 (NNNNYNYNNFNNNNFNNNNNISNNGNGNIN). The PIPK domain maps to 2275–2596 (NNNNTNNNNE…RFRDAMWLYF (322 aa)).

The protein resides in the endosome membrane. Its subcellular location is the early endosome membrane. It is found in the cytoplasmic vesicle. The protein localises to the phagosome membrane. It localises to the late endosome membrane. The catalysed reaction is a 1,2-diacyl-sn-glycero-3-phospho-(1D-myo-inositol-3-phosphate) + ATP = a 1,2-diacyl-sn-glycero-3-phospho-(1D-myo-inositol-3,5-bisphosphate) + ADP + H(+). The enzyme catalyses a 1,2-diacyl-sn-glycero-3-phospho-(1D-myo-inositol) + ATP = a 1,2-diacyl-sn-glycero-3-phospho-(1D-myo-inositol-5-phosphate) + ADP + H(+). It carries out the reaction L-seryl-[protein] + ATP = O-phospho-L-seryl-[protein] + ADP + H(+). Functionally, dual specificity kinase part of the PI(3,5)P2 regulatory complex which regulates both the synthesis and turnover of phosphatidylinositol 3,5-bisphosphate (PtdIns(3,5)P2). Catalyzes the phosphorylation of phosphatidylinositol 3-phosphate on the fifth hydroxyl of the myo-inositol ring, to form phosphatidylinositol 3,5-bisphosphate. The protein is 1-phosphatidylinositol 3-phosphate 5-kinase (pip5k3) of Dictyostelium discoideum (Social amoeba).